The chain runs to 246 residues: Pyridoxine 5'-phosphate synthase (246 aa).

Residue Asn12 participates in 3-amino-2-oxopropyl phosphate binding. 14 to 15 (DH) serves as a coordination point for 1-deoxy-D-xylulose 5-phosphate. Residue Arg23 participates in 3-amino-2-oxopropyl phosphate binding. His48 functions as the Proton acceptor in the catalytic mechanism. 1-deoxy-D-xylulose 5-phosphate is bound by residues Arg50 and His55. The active-site Proton acceptor is the Glu75. Thr105 lines the 1-deoxy-D-xylulose 5-phosphate pocket. The active-site Proton donor is His196. Residues Gly197 and 218–219 (GH) contribute to the 3-amino-2-oxopropyl phosphate site.

It belongs to the PNP synthase family. In terms of assembly, homooctamer; tetramer of dimers.

Its subcellular location is the cytoplasm. It carries out the reaction 3-amino-2-oxopropyl phosphate + 1-deoxy-D-xylulose 5-phosphate = pyridoxine 5'-phosphate + phosphate + 2 H2O + H(+). It functions in the pathway cofactor biosynthesis; pyridoxine 5'-phosphate biosynthesis; pyridoxine 5'-phosphate from D-erythrose 4-phosphate: step 5/5. Its function is as follows. Catalyzes the complicated ring closure reaction between the two acyclic compounds 1-deoxy-D-xylulose-5-phosphate (DXP) and 3-amino-2-oxopropyl phosphate (1-amino-acetone-3-phosphate or AAP) to form pyridoxine 5'-phosphate (PNP) and inorganic phosphate. This is Pyridoxine 5'-phosphate synthase from Pseudomonas syringae pv. syringae (strain B728a).